A 952-amino-acid polypeptide reads, in one-letter code: Bifunctional ent-kaurene synthase (952 aa).

Residues 328-331 (DVDD) carry the DXDD B-type cyclization motif motif. The Mg(2+) site is built by Asp668, Glu672, Asn848, Asp849, Ser852, and Asp856. Residues 668–672 (DEYME) carry the DEXXE A-type cyclization motif motif.

This sequence belongs to the terpene synthase family. Mg(2+) serves as cofactor.

The enzyme catalyses ent-copalyl diphosphate = ent-kaur-16-ene + diphosphate. The catalysed reaction is (2E,6E,10E)-geranylgeranyl diphosphate = ent-copalyl diphosphate. Its pathway is plant hormone biosynthesis; gibberellin biosynthesis. Functionally, bifunctional ent-kaurene synthase; part of the gene cluster that mediates the biosynthesis of gibberellins (GAs), diterpenoids that may provide a selective advantage during infection of the preferred host plant, rice. Gibberellins (GAs) are diterpenoids and are synthesized via the mevalonate pathway. Biosynthesis of the major metabolite GA3 (gibberellic acid) from geranylgeranyl diphosphate (GGPP) requires 13 steps. The GGPP produced by the geranylgeranyl diphosphate synthase GGS2 is converted to ent-kaurene via ent-copalyldiphosphate in a two-step cyclization reaction performed by the bifunctional ent-copalyl diphosphate synthase/ent-kaurene synthase enzyme (CPS/KS). Ent-Kaurene is metabolized to GAs by a series of oxidation reactions catalyzed by cytochrome P450 monooxygenases. Cytochrome P450 monooxygenase P450-4 is an ent-kaurene oxidase that catalyzes the three oxidation steps between ent-kaurene and ent-kaurenoic acid. The highly multifunctional cytochrome P450 monooxygenase P450-1 then catalyzes four steps involving oxidation at two carbon atoms, in the main pathway from ent-kaurenoic acid to GA14 via GA12-aldehyde as well as producing kaurenolides and fujenoic acids as by-products. The cytochrome P450 monooxygenase P450-2 then converts GA14 to GA4 by removal of C-20. GA4 is further converted to GA7 by the GA4 desaturase DES via 1,2-desaturation before cytochrome P450 monooxygenase P450-3, a 13-hydroxylase, hydroxylates GA7 to GA3, the final product of the GA-biosynthetic pathway. This is Bifunctional ent-kaurene synthase from Gibberella fujikuroi (strain CBS 195.34 / IMI 58289 / NRRL A-6831) (Bakanae and foot rot disease fungus).